Reading from the N-terminus, the 46-residue chain is GPSFCKADEKPCEYHSDCCNCCLSGICAPSTNWILPGCSTSSFFKI.

4-hydroxyproline is present on residues P2 and P11. 4 disulfide bridges follow: C5–C19, C12–C22, C18–C27, and C21–C38. 4-hydroxyproline is present on P29. F44 is modified (D-phenylalanine).

Belongs to the conotoxin I1 superfamily. As to expression, expressed by the venom duct.

The protein resides in the secreted. In terms of biological role, iota-conotoxins bind to voltage-gated sodium channels (Nav) and act as agonists by shifting the voltage-dependence of activation to more hyperpolarized levels. Produces general excitatory symptoms. The sequence is that of Iota-conotoxin-like R11.7 from Conus radiatus (Rayed cone).